Consider the following 87-residue polypeptide: Large ribosomal subunit protein eL33 (87 aa).

Belongs to the eukaryotic ribosomal protein eL33 family.

This chain is Large ribosomal subunit protein eL33, found in Pyrococcus horikoshii (strain ATCC 700860 / DSM 12428 / JCM 9974 / NBRC 100139 / OT-3).